Consider the following 190-residue polypeptide: Somatotropin (190 aa).

Residue His-19 coordinates Zn(2+). A disulfide bond links Cys-52 and Cys-163. Residue Ser-105 is modified to Phosphoserine. Zn(2+) is bound at residue Glu-172. Cys-180 and Cys-188 form a disulfide bridge.

It belongs to the somatotropin/prolactin family.

The protein resides in the secreted. Plays an important role in growth control. Its major role in stimulating body growth is to stimulate the liver and other tissues to secrete IGF1. It stimulates both the differentiation and proliferation of myoblasts. It also stimulates amino acid uptake and protein synthesis in muscle and other tissues. The chain is Somatotropin (GH1) from Vulpes vulpes (Red fox).